A 264-amino-acid polypeptide reads, in one-letter code: tRNA pseudouridine synthase A (264 aa).

Catalysis depends on Asp-51, which acts as the Nucleophile. Tyr-109 is a substrate binding site.

It belongs to the tRNA pseudouridine synthase TruA family. In terms of assembly, homodimer.

It catalyses the reaction uridine(38/39/40) in tRNA = pseudouridine(38/39/40) in tRNA. In terms of biological role, formation of pseudouridine at positions 38, 39 and 40 in the anticodon stem and loop of transfer RNAs. In Aromatoleum aromaticum (strain DSM 19018 / LMG 30748 / EbN1) (Azoarcus sp. (strain EbN1)), this protein is tRNA pseudouridine synthase A.